The following is a 327-amino-acid chain: Aspartate--ammonia ligase (327 aa).

The protein belongs to the class-II aminoacyl-tRNA synthetase family. AsnA subfamily.

The protein resides in the cytoplasm. The catalysed reaction is L-aspartate + NH4(+) + ATP = L-asparagine + AMP + diphosphate + H(+). It functions in the pathway amino-acid biosynthesis; L-asparagine biosynthesis; L-asparagine from L-aspartate (ammonia route): step 1/1. This chain is Aspartate--ammonia ligase, found in Bacillus cereus (strain AH820).